Here is a 47-residue protein sequence, read N- to C-terminus: Potamin-1 (47 aa).

Cystine bridges form between Cys-3–Cys-40, Cys-6–Cys-24, and Cys-7–Cys-36.

Its function is as follows. Inhibitor of serine proteases chymotrypsin, papain and trypsin. Has strong antifungal activity against C.albicans and R.solani. Has antibacterial activity against the Gram-positive bacterium C.michiganense, but lacks antibacterial activity against the Gram-positive bacterium S.aureus. Lacks hemolytic activity against human erythrocytes. In Solanum tuberosum (Potato), this protein is Potamin-1.